The primary structure comprises 76 residues: Small ribosomal subunit protein bS16c (76 aa).

The protein belongs to the bacterial ribosomal protein bS16 family.

It localises to the plastid. The protein resides in the chloroplast. In Guillardia theta (Cryptophyte), this protein is Small ribosomal subunit protein bS16c.